Here is a 405-residue protein sequence, read N- to C-terminus: Arginine deiminase (405 aa).

Cysteine 395 serves as the catalytic Amidino-cysteine intermediate.

The protein belongs to the arginine deiminase family.

The protein resides in the cytoplasm. It carries out the reaction L-arginine + H2O = L-citrulline + NH4(+). It participates in amino-acid degradation; L-arginine degradation via ADI pathway; carbamoyl phosphate from L-arginine: step 1/2. This Rhodococcus jostii (strain RHA1) protein is Arginine deiminase.